The primary structure comprises 199 residues: Recombination protein RecR (199 aa).

The segment at 58 to 73 (CKKCFNLTSEDECEIC) adopts a C4-type zinc-finger fold. A Toprim domain is found at 81–175 (KLICVVSETK…KVTRIAYGLP (95 aa)).

This sequence belongs to the RecR family.

Its function is as follows. May play a role in DNA repair. It seems to be involved in an RecBC-independent recombinational process of DNA repair. It may act with RecF and RecO. This Prochlorococcus marinus (strain AS9601) protein is Recombination protein RecR.